The sequence spans 314 residues: uncharacterized protein (314 aa).

The next 2 membrane-spanning stretches (helical) occupy residues 23 to 43 (LALG…MALF) and 98 to 118 (MASG…GPLT). Positions 165–184 (GLGSGAGGGDVGGGGAGGTT) are enriched in gly residues. Positions 165–314 (GLGSGAGGGD…APDEKTDAGE (150 aa)) are disordered. Over residues 190–202 (GPPPVPTSSPPTT) the composition is skewed to pro residues. Composition is skewed to low complexity over residues 203-212 (PAGAPTKSAT) and 219-232 (ASPA…AGMP). A helical membrane pass occupies residues 221–241 (PASAHMGAAGMPMVPPGAMGA). Residues 294 to 314 (LLPEHKDFGRIAPDEKTDAGE) show a composition bias toward basic and acidic residues.

It localises to the cell membrane. This is an uncharacterized protein from Mycobacterium tuberculosis (strain CDC 1551 / Oshkosh).